We begin with the raw amino-acid sequence, 37 residues long: Conotoxin Bt1.8 (37 aa).

The propeptide occupies 1-20 (PDGRNAAAKAFDLITPTVRK). Cystine bridges form between cysteine 22-cysteine 28 and cysteine 23-cysteine 36. A Cysteine amide modification is found at cysteine 36.

This sequence belongs to the conotoxin A superfamily. Expressed by the venom duct.

The protein resides in the secreted. Its function is as follows. Alpha-conotoxins bind to the nicotinic acetylcholine receptors (nAChR) and inhibit them. This toxin inhibits mammalian alpha-3-beta-2/CHRNA3-CHRNB2 nAChR (IC(50)=9.4 nM (rat), IC(50)=8.8 nM (human)), as well as the subunit chimera alpha-6/alpha-3-beta-2-beta-3 nAChR (CHRNA6/CHRNA3-CHRNB2-CHRNB3)(IC(50)=2.1 nM (rat), IC(50)=1.7 nM (human)). Binds to rat alpha-6/alpha-3-beta-2-beta-3 more rapidly than to alpha-3-beta-2, and dissociates more rapidly from alpha-3-beta-2 than from alpha-6/alpha-3-beta-2-beta-3. The polypeptide is Conotoxin Bt1.8 (Conus betulinus (Beech cone)).